We begin with the raw amino-acid sequence, 118 residues long: Developmental pluripotency-associated protein 5A (118 aa).

In terms of domain architecture, KH; atypical spans 24–86 (PEVFQVQSLV…NNKIRAKWML (63 aa)).

It belongs to the KHDC1 family.

The protein resides in the cytoplasm. Its function is as follows. Involved in the maintenance of embryonic stem (ES) cell pluripotency. Dispensable for self-renewal of pluripotent ES cells and establishment of germ cells. Associates with specific target mRNAs. The sequence is that of Developmental pluripotency-associated protein 5A (Dppa5a) from Mus musculus (Mouse).